The primary structure comprises 731 residues: Catalase-peroxidase (731 aa).

Positions 1–23 (MSDLKCPFSGHTGAVTPAGNTNN) are disordered. Positions 95-218 (WHSAGTYRTG…LAAVEMGLIY (124 aa)) form a cross-link, tryptophyl-tyrosyl-methioninium (Trp-Tyr) (with M-244). His96 functions as the Proton acceptor in the catalytic mechanism. Positions 218-244 (YVNPEGPHGEPDPVASGRDVRETFARM) form a cross-link, tryptophyl-tyrosyl-methioninium (Tyr-Met) (with W-95). His259 contributes to the heme b binding site.

It belongs to the peroxidase family. Peroxidase/catalase subfamily. In terms of assembly, homodimer or homotetramer. Requires heme b as cofactor. Post-translationally, formation of the three residue Trp-Tyr-Met cross-link is important for the catalase, but not the peroxidase activity of the enzyme.

It catalyses the reaction H2O2 + AH2 = A + 2 H2O. It carries out the reaction 2 H2O2 = O2 + 2 H2O. In terms of biological role, bifunctional enzyme with both catalase and broad-spectrum peroxidase activity. This chain is Catalase-peroxidase, found in Synechococcus sp. (strain WH7803).